We begin with the raw amino-acid sequence, 283 residues long: MNDSQRVSILSEALPYIQSFSGRKIVIKYGGSVMEDDDLKNAFFRDIALLSTVGVCPIVIHGGGPEINNWLKKLEISPKFENGLRITDQKTMEIVEMVLMGRVNKQIVKGINKTGSLAVGISGLDGNLIQSRELGDGSHGLVGEVTKINPEILDPLISKGYIPIISSIGSTVEGISHNINADFVAGEIAAAISAEKLILLTDTQGILKEKDNKNSLVEKTNLKEARDLIDKKIVTEGMIPKTECCIRALAQGVKAAHIIDGRVQHSLLLEIFTNTGIGTMIVA.

Substrate contacts are provided by residues 63 to 64, Arg-85, and Asn-178; that span reads GG.

The protein belongs to the acetylglutamate kinase family. ArgB subfamily.

The protein resides in the cytoplasm. It catalyses the reaction N-acetyl-L-glutamate + ATP = N-acetyl-L-glutamyl 5-phosphate + ADP. Its pathway is amino-acid biosynthesis; L-arginine biosynthesis; N(2)-acetyl-L-ornithine from L-glutamate: step 2/4. Its function is as follows. Catalyzes the ATP-dependent phosphorylation of N-acetyl-L-glutamate. The sequence is that of Acetylglutamate kinase from Prochlorococcus marinus (strain MIT 9301).